We begin with the raw amino-acid sequence, 140 residues long: Histone H2B (140 aa).

Over residues 1 to 10 (MPPKAAEKKP) the composition is skewed to basic and acidic residues. A disordered region spans residues 1–48 (MPPKAAEKKPSTGGKAPAGKAPAEKKEAGKKTAAAASGDKKKRGKTRK). N6-acetyllysine; alternate is present on residues Lys8 and Lys9. Residues Lys8 and Lys9 each participate in a glycyl lysine isopeptide (Lys-Gly) (interchain with G-Cter in SUMO); alternate cross-link. Over residues 11-21 (STGGKAPAGKA) the composition is skewed to low complexity. An N6-acetyllysine modification is found at Lys15. Residue Lys25 is modified to N6-acetyllysine; alternate. Lys25 participates in a covalent cross-link: Glycyl lysine isopeptide (Lys-Gly) (interchain with G-Cter in SUMO); alternate. A Glycyl lysine isopeptide (Lys-Gly) (interchain with G-Cter in SUMO) cross-link involves residue Lys26. A Glycyl lysine isopeptide (Lys-Gly) (interchain with G-Cter in ubiquitin) cross-link involves residue Lys134.

This sequence belongs to the histone H2B family. In terms of assembly, the nucleosome is a histone octamer containing two molecules each of H2A, H2B, H3 and H4 assembled in one H3-H4 heterotetramer and two H2A-H2B heterodimers. The octamer wraps approximately 147 bp of DNA. In terms of processing, monoubiquitinated by the ubc2-bre1 complex to form H2BK123ub1. H2BK123ub1 gives a specific tag for epigenetic transcriptional activation and is also prerequisite for H3K4me and H3K79me formation. H2BK123ub1 also modulates the formation of double-strand breaks during meiosis and is a prerequisite for DNA-damage checkpoint activation. Acetylated by gcn5 to form H2BK11ac and H2BK16ac. H2BK16ac can also be formed by esa1. Acetylation of N-terminal lysines and particularly formation of H2BK11acK16ac has a positive effect on transcription. Post-translationally, sumoylation to form H2BK6su or H2BK7su, and probably also H2BK16su or H2BK17su, occurs preferentially near the telomeres and represses gene transcription.

It is found in the nucleus. The protein resides in the chromosome. Core component of nucleosome. Nucleosomes wrap and compact DNA into chromatin, limiting DNA accessibility to the cellular machineries which require DNA as a template. Histones thereby play a central role in transcription regulation, DNA repair, DNA replication and chromosomal stability. DNA accessibility is regulated via a complex set of post-translational modifications of histones, also called histone code, and nucleosome remodeling. The polypeptide is Histone H2B (htb1) (Aspergillus clavatus (strain ATCC 1007 / CBS 513.65 / DSM 816 / NCTC 3887 / NRRL 1 / QM 1276 / 107)).